A 305-amino-acid chain; its full sequence is Ribonuclease HIII (305 aa).

Residues 91–305 (WSVIGSDEVG…ANTQKAQKLL (215 aa)) form the RNase H type-2 domain. 3 residues coordinate a divalent metal cation: aspartate 97, glutamate 98, and aspartate 201.

This sequence belongs to the RNase HII family. RnhC subfamily. Mn(2+) serves as cofactor. Mg(2+) is required as a cofactor.

It localises to the cytoplasm. It catalyses the reaction Endonucleolytic cleavage to 5'-phosphomonoester.. Functionally, endonuclease that specifically degrades the RNA of RNA-DNA hybrids. The polypeptide is Ribonuclease HIII (Enterococcus faecalis (strain ATCC 700802 / V583)).